Reading from the N-terminus, the 141-residue chain is Mitochondrial import inner membrane translocase subunit Tim16 (141 aa).

Disordered stretches follow at residues 34–53 (AARR…SNLR) and 108–141 (LDHE…RQRR). Positions 60-113 (EAKQILNIDDPKNVDAITKNYEHLFQVNERSKGGSFYIQSKVFRAKERLDHEIK) are J-like. Residues 108–118 (LDHEIKAHEQP) show a composition bias toward basic and acidic residues.

The protein belongs to the TIM16/PAM16 family. Probable component of the PAM complex at least composed of a mitochondrial HSP70 protein, Roe1, TIM44, blp/TIM16 and TIM14. Associates with the TIM23 complex. Expressed in distinct cells in the embryonic and larval nervous system.

It localises to the mitochondrion inner membrane. Functionally, regulates ATP-dependent protein translocation into the mitochondrial matrix. Essential for larval development. This Drosophila melanogaster (Fruit fly) protein is Mitochondrial import inner membrane translocase subunit Tim16 (blp).